Here is a 619-residue protein sequence, read N- to C-terminus: Dihydroxy-acid dehydratase (619 aa).

A Mg(2+)-binding site is contributed by D81. A [2Fe-2S] cluster-binding site is contributed by C122. Residues D123 and K124 each coordinate Mg(2+). Residue K124 is modified to N6-carboxylysine. Residue C201 participates in [2Fe-2S] cluster binding. E496 is a binding site for Mg(2+). The active-site Proton acceptor is S522.

This sequence belongs to the IlvD/Edd family. In terms of assembly, homodimer. The cofactor is [2Fe-2S] cluster. Mg(2+) serves as cofactor.

It catalyses the reaction (2R)-2,3-dihydroxy-3-methylbutanoate = 3-methyl-2-oxobutanoate + H2O. The enzyme catalyses (2R,3R)-2,3-dihydroxy-3-methylpentanoate = (S)-3-methyl-2-oxopentanoate + H2O. The protein operates within amino-acid biosynthesis; L-isoleucine biosynthesis; L-isoleucine from 2-oxobutanoate: step 3/4. Its pathway is amino-acid biosynthesis; L-valine biosynthesis; L-valine from pyruvate: step 3/4. Functions in the biosynthesis of branched-chain amino acids. Catalyzes the dehydration of (2R,3R)-2,3-dihydroxy-3-methylpentanoate (2,3-dihydroxy-3-methylvalerate) into 2-oxo-3-methylpentanoate (2-oxo-3-methylvalerate) and of (2R)-2,3-dihydroxy-3-methylbutanoate (2,3-dihydroxyisovalerate) into 2-oxo-3-methylbutanoate (2-oxoisovalerate), the penultimate precursor to L-isoleucine and L-valine, respectively. The polypeptide is Dihydroxy-acid dehydratase (Burkholderia vietnamiensis (strain G4 / LMG 22486) (Burkholderia cepacia (strain R1808))).